Consider the following 132-residue polypeptide: UPF0299 membrane protein YohJ (132 aa).

Residues M1–N6 are Periplasmic-facing. Residues I7–F27 traverse the membrane as a helical segment. Residues I28–S30 lie on the Cytoplasmic side of the membrane. A helical membrane pass occupies residues L31 to A51. Over L52–P62 the chain is Periplasmic. The helical transmembrane segment at G63 to M83 threads the bilayer. The Cytoplasmic segment spans residues Q84 to Q92. Residues F93 to W113 form a helical membrane-spanning segment. The Periplasmic portion of the chain corresponds to S114–E132.

Belongs to the UPF0299 family.

The protein localises to the cell inner membrane. This is UPF0299 membrane protein YohJ (yohJ) from Escherichia coli O157:H7.